Reading from the N-terminus, the 394-residue chain is Muscle cell intermediate filament protein AV71 (394 aa).

The segment at Ala-1–Leu-73 is coil 1B. An IF rod domain is found at Ala-1–Ala-239. The interval Gln-74–Asn-91 is linker 12. Residues Glu-92 to Ala-239 are coil 2. Residues Gly-240–Asn-394 form a tail region. Positions Ser-272–Ser-389 constitute an LTD domain.

The protein belongs to the intermediate filament family.

The polypeptide is Muscle cell intermediate filament protein AV71 (AV71) (Acanthocheilonema viteae (Filarial nematode worm)).